The chain runs to 248 residues: 5'-nucleotidase SurE (248 aa).

4 residues coordinate a divalent metal cation: Asp8, Asp9, Ser39, and Asn91.

This sequence belongs to the SurE nucleotidase family. A divalent metal cation serves as cofactor.

The protein resides in the cytoplasm. It catalyses the reaction a ribonucleoside 5'-phosphate + H2O = a ribonucleoside + phosphate. Nucleotidase that shows phosphatase activity on nucleoside 5'-monophosphates. The sequence is that of 5'-nucleotidase SurE from Marinomonas sp. (strain MWYL1).